The chain runs to 65 residues: Small ribosomal subunit protein eS31 (65 aa).

Residues C36, C39, C55, and C58 each coordinate Zn(2+). The C4-type zinc finger occupies C36–C58.

The protein belongs to the eukaryotic ribosomal protein eS31 family. As to quaternary structure, part of the 30S ribosomal subunit. Zn(2+) serves as cofactor.

This Pyrobaculum calidifontis (strain DSM 21063 / JCM 11548 / VA1) protein is Small ribosomal subunit protein eS31.